Consider the following 722-residue polypeptide: Polyribonucleotide nucleotidyltransferase (722 aa).

Positions 505 and 511 each coordinate Mg(2+). A KH domain is found at 572–631 (PSITTIKIHPDKIRDVIGKGGATIRGICDETGASIDLDDDGNVKIYADNAAAAQAAVNRV). The S1 motif domain maps to 641–709 (GAIYKGRVER…NRGRVKLSMK (69 aa)).

The protein belongs to the polyribonucleotide nucleotidyltransferase family. As to quaternary structure, component of the RNA degradosome, which is a multiprotein complex involved in RNA processing and mRNA degradation. The cofactor is Mg(2+).

It is found in the cytoplasm. It carries out the reaction RNA(n+1) + phosphate = RNA(n) + a ribonucleoside 5'-diphosphate. In terms of biological role, involved in mRNA degradation. Catalyzes the phosphorolysis of single-stranded polyribonucleotides processively in the 3'- to 5'-direction. The protein is Polyribonucleotide nucleotidyltransferase of Marinobacter nauticus (strain ATCC 700491 / DSM 11845 / VT8) (Marinobacter aquaeolei).